The following is a 157-amino-acid chain: UPF0251 protein CLK_0815 (157 aa).

It belongs to the UPF0251 family.

The polypeptide is UPF0251 protein CLK_0815 (Clostridium botulinum (strain Loch Maree / Type A3)).